A 243-amino-acid chain; its full sequence is Small ribosomal subunit protein uS5 (243 aa).

The interval 1 to 54 (MSDNEKETQVAEETQNTQATAESSNNDERRGRRNNRGGEGRRGDRRGRREDNHE) is disordered. A compositionally biased stretch (polar residues) spans 11–24 (AEETQNTQATAESS). Residues 26–54 (NDERRGRRNNRGGEGRRGDRRGRREDNHE) are compositionally biased toward basic and acidic residues. Residues 57-120 (MLDRVVTINR…LDAKKHLFNV (64 aa)) enclose the S5 DRBM domain.

This sequence belongs to the universal ribosomal protein uS5 family. As to quaternary structure, part of the 30S ribosomal subunit. Contacts proteins S4 and S8.

With S4 and S12 plays an important role in translational accuracy. Its function is as follows. Located at the back of the 30S subunit body where it stabilizes the conformation of the head with respect to the body. The polypeptide is Small ribosomal subunit protein uS5 (Bifidobacterium animalis subsp. lactis (strain AD011)).